We begin with the raw amino-acid sequence, 738 residues long: MEHIYQDAWIIPFIPLPIPIAIGLGLLLFPTTTKRIRRIWAFFSVLLLSIIMIFSVILSIKQIDGNPIYQYVWSWTINNDFSLDFGNFIDPLTSIMLILITTVGIMVLIYSDNYMSHDQGYLRFFAYMSFFNASMLGLVTSSNLIQIYIFWELVGMCSYLLIGFWFTRPLAANACQKAFVTNRVGDFSLFLGILGLYWITGSFEFRDFFEIAKNLIDNNGYNSFFLTLCTSLLFVGAVAKSAQFPLHVWLPDAMEGPTPISALIHAATMVAAGIFLVARLFPLFTVIPYIMNIIALVGIITLLLGATLALAQRDIKRSLAYSTMSQLGYIMLALGMGSYRAALFHLITHAYSKALLFLGSGSIIHSMENVVGYSPDKSQNMALMGGLTKYAPITKTSFLLGTLSLCGIPPLACFWSKDEILNDSWLYSPIFATIACLTAGLTAFYMFRMYLLTFEGHLNINCKNYSAKKNNGLYSISIWGKMGSKVIQNNYFVSTMNNYEKITLKAKQIDDNGISNMMRPFITINKIFDNTKTFTYPYESDNTMLFPLFVLVIFTFFIGYIGILPFDQGRIHFDILSKWLIPSINFLHSDFNNSFDWYEFLINALFSVSIAYFGIFIALFLYGPAYSYFHNFNLINFFIKRGPHRILWDKIINRVYNWSYNRGYIDIFYAKILIAGIRGLADFTYFFDKKVIEGIVNGIGVISFFVAESIKYVGGGRISSYLFFYLFYVAVFLVICLN.

A run of 17 helical transmembrane segments spans residues 9–29 (WIIPFIPLPIPIAIGLGLLLF), 39–59 (IWAFFSVLLLSIIMIFSVILS), 89–109 (IDPLTSIMLILITTVGIMVLI), 125–145 (FAYMSFFNASMLGLVTSSNLI), 147–167 (IYIFWELVGMCSYLLIGFWFT), 185–205 (GDFSLFLGILGLYWITGSFEF), 224–244 (FFLTLCTSLLFVGAVAKSAQF), 258–278 (TPISALIHAATMVAAGIFLVA), 280–300 (LFPLFTVIPYIMNIIALVGII), 327–347 (LGYIMLALGMGSYRAALFHLI), 396–416 (TSFLLGTLSLCGIPPLACFWS), 425–445 (WLYSPIFATIACLTAGLTAFY), 544–564 (MLFPLFVLVIFTFFIGYIGIL), 600–620 (FLINALFSVSIAYFGIFIALF), 667–687 (IFYAKILIAGIRGLADFTYFF), 694–714 (GIVNGIGVISFFVAESIKYVG), and 718–738 (ISSYLFFYLFYVAVFLVICLN).

Belongs to the complex I subunit 5 family. In terms of assembly, NDH is composed of at least 16 different subunits, 5 of which are encoded in the nucleus.

The protein resides in the plastid. It localises to the chloroplast thylakoid membrane. The catalysed reaction is a plastoquinone + NADH + (n+1) H(+)(in) = a plastoquinol + NAD(+) + n H(+)(out). It carries out the reaction a plastoquinone + NADPH + (n+1) H(+)(in) = a plastoquinol + NADP(+) + n H(+)(out). In terms of biological role, NDH shuttles electrons from NAD(P)H:plastoquinone, via FMN and iron-sulfur (Fe-S) centers, to quinones in the photosynthetic chain and possibly in a chloroplast respiratory chain. The immediate electron acceptor for the enzyme in this species is believed to be plastoquinone. Couples the redox reaction to proton translocation, and thus conserves the redox energy in a proton gradient. In Ranunculus macranthus (Large buttercup), this protein is NAD(P)H-quinone oxidoreductase subunit 5, chloroplastic (ndhF).